A 497-amino-acid polypeptide reads, in one-letter code: Keratin, type II cytoskeletal 8 (497 aa).

Positions 2–108 (TSYQRTVTVR…DPRIGQVRLE (107 aa)) are head. The segment at 109 to 149 (EKEQIKTLNNQFAGFIDKVRYLEQQNKLLETKWQLLQNQTT) is coil 1A. One can recognise an IF rod domain in the interval 109–421 (EKEQIKTLNN…KLLEGEESRL (313 aa)). Positions 145–162 (QNQTTPSRSNLDSMFEAY) are linker 1. The coil 1B stretch occupies residues 163 to 254 (ISNLRRQLDT…QIYDEEIREL (92 aa)). The tract at residues 255-278 (QTQIQDTSVIVQMDNNRQLDLDNI) is linker 12. Residues 279-417 (IAEVRAQYED…ATYRKLLEGE (139 aa)) are coil 2. A tail region spans residues 418–497 (ESRLASGIQA…VSERSNIVKE (80 aa)).

It belongs to the intermediate filament family. As to quaternary structure, heterotetramer of two type I and two type II keratins. Keratin-8 associates with keratin-18. Expressed in skin.

It is found in the cytoplasm. Its subcellular location is the nucleus. The protein localises to the nucleoplasm. The protein resides in the nucleus matrix. Functionally, together with KRT19, helps to link the contractile apparatus to dystrophin at the costameres of striated muscle. This chain is Keratin, type II cytoskeletal 8, found in Protopterus aethiopicus (Marbled lungfish).